The primary structure comprises 381 residues: GDP-mannose transporter (381 aa).

Over 1 to 39 the chain is Cytoplasmic; it reads MVESKKTDDYAIEMDKIDQGSKNFEAAAPPQPRSVPSSS. The chain crosses the membrane as a helical span at residues 40-60; the sequence is LSGNPVLPVLAYCGSSILMTV. Residues 61–68 are Lumenal-facing; that stretch reads MNKYVLSG. Residues 69–89 traverse the membrane as a helical segment; it reads LDFNLNFFLLCVQSIVCIIAI. Residues 90-109 are Cytoplasmic-facing; that stretch reads QTCKFCGLITYRDFSADEAK. The helical transmembrane segment at 110-126 threads the bilayer; it reads KWFPISLLLIGMIYTGS. Topologically, residues 127–133 are lumenal; the sequence is KALQFLS. Residues 134-150 traverse the membrane as a helical segment; the sequence is IPVYTIFKNLTIILIAY. Residues 151 to 159 lie on the Cytoplasmic side of the membrane; sequence GEVLWFGGS. Residues 160 to 181 traverse the membrane as a helical segment; it reads VTGLTLFSFGLMVLSSIIAAWA. At 182–199 the chain is on the lumenal side; sequence DIKHAVESSGDTSAQVST. The chain crosses the membrane as a helical span at residues 200-220; it reads LNAGYIWMLINCLCTSSYVLG. Residues 221-232 lie on the Cytoplasmic side of the membrane; it reads MRKRIKLTNFKD. Residues 233 to 253 form a helical membrane-spanning segment; the sequence is FDTMFYNNLLSIPVLVVLTGL. Residues 254–273 are Lumenal-facing; that stretch reads MEDWSSANIDRNFPQADRSS. A helical membrane pass occupies residues 274–294; that stretch reads IMFAMILSGLSSVFISYTSAW. Residues 295-302 are Cytoplasmic-facing; that stretch reads CVRVTSST. A helical transmembrane segment spans residues 303-323; the sequence is TYSMVGALNKLPIALSGLIFF. Residues 324–326 lie on the Lumenal side of the membrane; that stretch reads DAP. The helical transmembrane segment at 327–347 threads the bilayer; sequence VTFPSVSAIAVGFVSGIVYAI. Residues 348 to 381 are Cytoplasmic-facing; that stretch reads AKIKQNAKPKTGVLPTSNPLVSASSQSMRDSLRS.

Belongs to the TPT transporter family. SLC35D subfamily. In terms of assembly, homooligomer.

Its subcellular location is the golgi apparatus membrane. The protein resides in the cytoplasmic vesicle membrane. The protein localises to the endoplasmic reticulum membrane. Functionally, involved in the import of GDP-mannose from the cytoplasm into the Golgi lumen. In Aspergillus oryzae (strain ATCC 42149 / RIB 40) (Yellow koji mold), this protein is GDP-mannose transporter (gmt1).